A 777-amino-acid chain; its full sequence is Aconitate hydratase, mitochondrial (777 aa).

Substrate is bound by residues Q96 and 189 to 191 (DSH). C383, C446, and C449 together coordinate [4Fe-4S] cluster. Residues R472, R477, R605, and 668 to 669 (SR) contribute to the substrate site.

The protein belongs to the aconitase/IPM isomerase family. As to quaternary structure, monomer. Requires [4Fe-4S] cluster as cofactor.

The protein localises to the mitochondrion. It catalyses the reaction citrate = D-threo-isocitrate. Its pathway is carbohydrate metabolism; tricarboxylic acid cycle; isocitrate from oxaloacetate: step 2/2. Its function is as follows. Catalyzes the isomerization of citrate to isocitrate via cis-aconitate, a step in the citric acid cycle. This is Aconitate hydratase, mitochondrial (ACO1) from Candida albicans (strain SC5314 / ATCC MYA-2876) (Yeast).